Here is a 384-residue protein sequence, read N- to C-terminus: DNA replication and repair protein RecF (384 aa).

30-37 (GNNAQGKS) is an ATP binding site.

The protein belongs to the RecF family.

The protein localises to the cytoplasm. The RecF protein is involved in DNA metabolism; it is required for DNA replication and normal SOS inducibility. RecF binds preferentially to single-stranded, linear DNA. It also seems to bind ATP. In Gloeothece citriformis (strain PCC 7424) (Cyanothece sp. (strain PCC 7424)), this protein is DNA replication and repair protein RecF.